The following is an 803-amino-acid chain: Isoamylase 1, chloroplastic (803 aa).

Residues 1 to 54 (MASLPHCLSARPLVVAAAPGRPGPGPGPWLRGGARRRNAAFSAGNAGRRVGLRR) constitute a chloroplast transit peptide. Asp432 serves as the catalytic Nucleophile. Glu488 acts as the Proton donor in catalysis.

Belongs to the glycosyl hydrolase 13 family. In terms of assembly, forms a homo-pentamer and a hetero-hexamer composed of five ISA1 and one ISA2. Interacts with FLO6/SIP4. Highly expressed in developing endosperm. Expressed at low levels in leaves.

The protein localises to the plastid. Its subcellular location is the chloroplast. The enzyme catalyses Hydrolysis of (1-&gt;6)-alpha-D-glucosidic branch linkages in glycogen, amylopectin and their beta-limit dextrins.. It participates in glycan biosynthesis; starch biosynthesis. Its activity is regulated as follows. Inhibited by copper chloride, mercury chloride, ammonium molybdate and para-chloromercuribenzoate. Starch-debranching enzyme involved in amylopectin biosynthesis in endosperm. Functions by removing excess branches or improper branches that interfere with the formation of double helices of the cluster chains of amylopectin and crystallization of starch. Works as ISA1 homooligomer or together with ISA2 as heterooligomer. The heterooligomer ISA1 and ISA2 possesses higher affinity than the ISA1 homooligomer for various branched polyglucans in vitro, but no marked differences exist in chain preferences for debranching of amylopectin and phytoglycogen between these forms. In Oryza sativa subsp. japonica (Rice), this protein is Isoamylase 1, chloroplastic.